The primary structure comprises 145 residues: Small ribosomal subunit protein uS9 (145 aa).

Polar residues predominate over residues 1–13 (MATDQHSNKSNVS). Residues 1–24 (MATDQHSNKSNVSAARKPLSPSPT) form a disordered region.

This sequence belongs to the universal ribosomal protein uS9 family.

The protein localises to the cytoplasm. The protein is Small ribosomal subunit protein uS9 (RPS16) of Lupinus polyphyllus (Large-leaved lupine).